Reading from the N-terminus, the 387-residue chain is UDP-Gal:alpha-D-GlcNAc-diphosphoundecaprenol alpha-1,3-galactosyltransferase (387 aa).

It belongs to the glycosyltransferase group 1 family. Glycosyltransferase 4 subfamily. The cofactor is Mg(2+). Mn(2+) serves as cofactor. Fe(2+) is required as a cofactor.

The catalysed reaction is N-acetyl-alpha-D-glucosaminyl-di-trans,octa-cis-undecaprenyl diphosphate + UDP-alpha-D-galactose = alpha-D-Gal-(1-&gt;3)-alpha-D-GlcNAc-di-trans,octa-cis-undecaprenyl diphosphate + UDP + H(+). It functions in the pathway bacterial outer membrane biogenesis; LPS O-antigen biosynthesis. Functionally, involved in the biosynthesis of the lipopolysaccharide (LPS) O-antigen region. Catalyzes the transfer of galactose from UDP-galactose to GlcNAc-undecaprenyl diphosphate via an alpha1,3-linkage. Has strict substrate specificity. The sequence is that of UDP-Gal:alpha-D-GlcNAc-diphosphoundecaprenol alpha-1,3-galactosyltransferase from Escherichia coli.